A 459-amino-acid polypeptide reads, in one-letter code: Inositol-trisphosphate 3-kinase A (459 aa).

The interval 1–26 is disordered; the sequence is MTLPGHPTGMARPRGAGPCSPGLERA. Omega-N-methylarginine is present on residues arginine 35, arginine 55, and arginine 62. A disordered region spans residues 49–164; it reads AAAGEPRARG…TSEDVGQKSH (116 aa). Residues 116–132 show a composition bias toward low complexity; it reads RRLSTSSLSSTGSSSLL. Phosphoserine is present on residues serine 135 and serine 195. ATP-binding positions include serine 195, lysine 207, 247–249, and aspartate 260; that span reads QDL. Lysine 262 and arginine 283 together coordinate substrate. The segment at 285–293 is calmodulin-binding; it reads DMYKKMLAV. 310–317 is a substrate binding site; that stretch reads KPRYMQWR. ATP-binding residues include lysine 334 and aspartate 414. Lysine 417 serves as a coordination point for substrate.

Belongs to the inositol phosphokinase (IPK) family.

It is found in the cytoplasm. It localises to the cytoskeleton. It catalyses the reaction 1D-myo-inositol 1,4,5-trisphosphate + ATP = 1D-myo-inositol 1,3,4,5-tetrakisphosphate + ADP + H(+). Its activity is regulated as follows. Activated by calcium/calmodulin. Functionally, catalyzes the phosphorylation of 1D-myo-inositol 1,4,5-trisphosphate (InsP3) into 1D-myo-inositol 1,3,4,5-tetrakisphosphate and participates to the regulation of calcium homeostasis. The polypeptide is Inositol-trisphosphate 3-kinase A (Rattus norvegicus (Rat)).